Reading from the N-terminus, the 338-residue chain is Lipoate-protein ligase A (338 aa).

The BPL/LPL catalytic domain occupies 29 to 216 (PATQRVLFLW…AFFAHYGERV (188 aa)). ATP is bound by residues Arg71, 76-79 (GAVF), and Lys134. Lys134 serves as a coordination point for (R)-lipoate.

Belongs to the LplA family. As to quaternary structure, monomer.

The protein resides in the cytoplasm. The enzyme catalyses L-lysyl-[lipoyl-carrier protein] + (R)-lipoate + ATP = N(6)-[(R)-lipoyl]-L-lysyl-[lipoyl-carrier protein] + AMP + diphosphate + H(+). Its pathway is protein modification; protein lipoylation via exogenous pathway; protein N(6)-(lipoyl)lysine from lipoate: step 1/2. The protein operates within protein modification; protein lipoylation via exogenous pathway; protein N(6)-(lipoyl)lysine from lipoate: step 2/2. In terms of biological role, catalyzes both the ATP-dependent activation of exogenously supplied lipoate to lipoyl-AMP and the transfer of the activated lipoyl onto the lipoyl domains of lipoate-dependent enzymes. The polypeptide is Lipoate-protein ligase A (Escherichia coli O157:H7).